Here is a 245-residue protein sequence, read N- to C-terminus: Bis(5'-nucleosyl)-tetraphosphatase PrpE [asymmetrical] (245 aa).

The protein belongs to the PrpE family. It depends on Ni(2+) as a cofactor.

It catalyses the reaction P(1),P(4)-bis(5'-guanosyl) tetraphosphate + H2O = GMP + GTP + 2 H(+). Asymmetrically hydrolyzes Ap4p to yield AMP and ATP. The sequence is that of Bis(5'-nucleosyl)-tetraphosphatase PrpE [asymmetrical] from Geobacillus sp. (strain WCH70).